A 680-amino-acid chain; its full sequence is Serine/threonine-protein kinase YPK1 (680 aa).

The span at 1 to 11 (MYSWKSKFKFG) shows a compositional bias: basic residues. The segment at 1–117 (MYSWKSKFKF…GTPNDATSSS (117 aa)) is disordered. Composition is skewed to basic and acidic residues over residues 12-21 (KSKEEKEAKH) and 41-56 (GEHDASITRSSLDRKG). At threonine 57 the chain carries Phosphothreonine. The span at 59–71 (NPSNSSVVPVRVS) shows a compositional bias: low complexity. Phosphoserine is present on residues serine 61, serine 64, and serine 71. The span at 73–83 (DASSSTSTVRD) shows a compositional bias: polar residues. Over residues 84–97 (SNGGNSENTNSSQN) the composition is skewed to low complexity. Residues 98–117 (LDETANIGSTGTPNDATSSS) show a composition bias toward polar residues. A Phosphoserine modification is found at serine 170. The region spanning 347–602 (FDLLKVIGKG…ADEIRNHPFF (256 aa)) is the Protein kinase domain. ATP contacts are provided by residues 353–361 (IGKGSFGKV) and lysine 376. Aspartate 470 acts as the Proton acceptor in catalysis. The residue at position 502 (threonine 502) is a Phosphothreonine. Threonine 504 is modified (phosphothreonine; by PKH1). Positions 603–673 (SQLSWKRLLM…VGNEQLGSSM (71 aa)) constitute an AGC-kinase C-terminal domain. Phosphoserine is present on residues serine 644 and serine 653. Phosphothreonine; by PKH1 is present on threonine 662. Serine 671 carries the post-translational modification Phosphoserine.

This sequence belongs to the protein kinase superfamily. AGC Ser/Thr protein kinase family. RAC subfamily. Autophosphorylated. Phytosphingosine level stimulates phosphorylation by PKH1. The N-terminal half is phosphorylated by FPK1. Phosphorylation is inhibited by exogenous addition of phytosphingosine.

The protein resides in the cytoplasm. It is found in the cell membrane. The catalysed reaction is L-seryl-[protein] + ATP = O-phospho-L-seryl-[protein] + ADP + H(+). It catalyses the reaction L-threonyl-[protein] + ATP = O-phospho-L-threonyl-[protein] + ADP + H(+). Activated by phytosphingosine (PHS), a sphingoid long chain base. Activated by PKH1 phosphorylation. Plays an essential role in the proliferation of yeast cells. Involved in a signaling pathway, required for optimal cell wall integrity, that acts in parallel with the PKC1-SLT2-dependent pathway. Downstream kinase in the sphingolipid-mediated signaling pathway. Phosphorylation is regulated by the intracellular sphingolipid concentration. Disruption or inhibition of sphingolipid synthesis leads to the activation and phosphorylation of YPK1 through the TORC2 and PKH1 pathways, which in turn phosphorylates ORM1 and LAG1 to activate sphingolipid synthesis. Cooperates with SLI1 in mediating resistance to the sphingolipid biosynthesis inhibitor drug myriocin (ISP-1); kinase activity is essential for the resistance. Required for both receptor-mediated and fluid-phase endocytosis, but is not necessary for receptor phosphorylation or ubiquitination. Necessary for the internalization of plasma membrane proteins carrying different types of internalization signals. Acts downstream of the PKH kinases to control endocytosis by phosphorylating components of the endocytic machinery. Phosphorylation of residue Thr-504 in the activation loop and residue Thr-662 are essential for activity. Phosphorylates and down-regulates flippase activator FPK1. The sequence is that of Serine/threonine-protein kinase YPK1 (YPK1) from Saccharomyces cerevisiae (strain ATCC 204508 / S288c) (Baker's yeast).